The sequence spans 327 residues: Methionyl-tRNA formyltransferase (327 aa).

Residue 118–121 (SLLP) participates in (6S)-5,6,7,8-tetrahydrofolate binding.

The protein belongs to the Fmt family.

The enzyme catalyses L-methionyl-tRNA(fMet) + (6R)-10-formyltetrahydrofolate = N-formyl-L-methionyl-tRNA(fMet) + (6S)-5,6,7,8-tetrahydrofolate + H(+). Its function is as follows. Attaches a formyl group to the free amino group of methionyl-tRNA(fMet). The formyl group appears to play a dual role in the initiator identity of N-formylmethionyl-tRNA by promoting its recognition by IF2 and preventing the misappropriation of this tRNA by the elongation apparatus. The polypeptide is Methionyl-tRNA formyltransferase (Corynebacterium jeikeium (strain K411)).